A 327-amino-acid chain; its full sequence is ATP-dependent 6-phosphofructokinase (327 aa).

Gly12 provides a ligand contact to ATP. ADP-binding positions include Arg22–Arg26 and Arg55–Asp60. ATP is bound by residues Arg73–Phe74 and Gly103–Ser106. Residue Asp104 coordinates Mg(2+). Substrate is bound at residue Thr127–Asp129. The active-site Proton acceptor is Asp129. Arg156 provides a ligand contact to ADP. Substrate contacts are provided by residues Arg164 and Met171 to Arg173. ADP is bound by residues Gly187–Glu189, Lys213, and Lys215–His217. Substrate is bound by residues Glu224, Arg245, and His251 to Arg254.

It belongs to the phosphofructokinase type A (PFKA) family. ATP-dependent PFK group I subfamily. Prokaryotic clade 'B1' sub-subfamily. Homotetramer. Mg(2+) is required as a cofactor.

It localises to the cytoplasm. It carries out the reaction beta-D-fructose 6-phosphate + ATP = beta-D-fructose 1,6-bisphosphate + ADP + H(+). Its pathway is carbohydrate degradation; glycolysis; D-glyceraldehyde 3-phosphate and glycerone phosphate from D-glucose: step 3/4. With respect to regulation, allosterically activated by ADP and other diphosphonucleosides, and allosterically inhibited by phosphoenolpyruvate. In terms of biological role, catalyzes the phosphorylation of D-fructose 6-phosphate to fructose 1,6-bisphosphate by ATP, the first committing step of glycolysis. In Hamiltonella defensa subsp. Acyrthosiphon pisum (strain 5AT), this protein is ATP-dependent 6-phosphofructokinase.